The following is a 153-amino-acid chain: MSNEQTFIAIKPDGVQRGLIGPIISRFENRGFKLVAMKLVSPPQSQLEQHYADLSDKPFFKGLVSYMLSGPICAMVWEGRDVVKTGRTILGATNPLASAPGTIRGDFAIDVGRNVCHGSDSVENAKKEIALWFKPEELISWKSATFDWVYEKA.

Lys-11, Phe-59, Arg-87, Thr-93, Arg-104, and Asn-114 together coordinate ATP. His-117 functions as the Pros-phosphohistidine intermediate in the catalytic mechanism.

It belongs to the NDK family. In terms of assembly, homotrimer. Requires Mg(2+) as cofactor.

The catalysed reaction is a 2'-deoxyribonucleoside 5'-diphosphate + ATP = a 2'-deoxyribonucleoside 5'-triphosphate + ADP. It carries out the reaction a ribonucleoside 5'-diphosphate + ATP = a ribonucleoside 5'-triphosphate + ADP. Its function is as follows. Major role in the synthesis of nucleoside triphosphates other than ATP. The ATP gamma phosphate is transferred to the NDP beta phosphate via a ping-pong mechanism, using a phosphorylated active-site intermediate. This chain is Nucleoside diphosphate kinase (ndk1), found in Aspergillus fumigatus (strain ATCC MYA-4609 / CBS 101355 / FGSC A1100 / Af293) (Neosartorya fumigata).